Here is a 510-residue protein sequence, read N- to C-terminus: Glycerol kinase (510 aa).

Residue Thr-13 participates in ADP binding. Thr-13 and Thr-14 together coordinate ATP. Residue Thr-13 coordinates sn-glycerol 3-phosphate. Arg-17 contributes to the ADP binding site. Positions 83, 84, 135, and 255 each coordinate sn-glycerol 3-phosphate. Glycerol is bound by residues Arg-83, Glu-84, Tyr-135, Asp-255, and Gln-256. ADP-binding residues include Thr-277, Gly-321, Gly-421, and Asn-425. Residues Thr-277, Gly-321, and Gly-421 each coordinate ATP.

The protein belongs to the FGGY kinase family.

The enzyme catalyses glycerol + ATP = sn-glycerol 3-phosphate + ADP + H(+). It functions in the pathway polyol metabolism; glycerol degradation via glycerol kinase pathway; sn-glycerol 3-phosphate from glycerol: step 1/1. In terms of biological role, key enzyme in the regulation of glycerol uptake and metabolism. Catalyzes the phosphorylation of glycerol to yield sn-glycerol 3-phosphate. In Haloarcula marismortui (strain ATCC 43049 / DSM 3752 / JCM 8966 / VKM B-1809) (Halobacterium marismortui), this protein is Glycerol kinase.